A 396-amino-acid chain; its full sequence is Schizokinen exporter SchE (396 aa).

Positions 1-25 (MLPKLILLATLYISQFIPTTFFIQA) are cleaved as a signal peptide. Over 26 to 39 (LPVFMRQQKMSLDV) the chain is Cytoplasmic. The chain crosses the membrane as a helical span at residues 40–60 (IGFLGLLILPSGLKFLWSPFI). Residues 61–73 (DRYRLGKLGHYRG) are Periplasmic-facing. A helical transmembrane segment spans residues 74 to 94 (WIICFQLLLISTMLVTAFIDI). Residues 95-104 (QDNLNAFLTC) lie on the Cytoplasmic side of the membrane. The chain crosses the membrane as a helical span at residues 105–127 (MFLASLFSSSQDIATDALAVNLL). At 128 to 137 (EPQERGLGNA) the chain is on the periplasmic side. The helical transmembrane segment at 138–158 (IQSGGNIFGAIIGGGVMLILL) threads the bilayer. Topologically, residues 159–162 (DKIG) are cytoplasmic. A helical membrane pass occupies residues 163–183 (WRYSLITLSIFMLINLVPILI). Residues 184–214 (YREKSQHQLENSTFFRSYFQPFISFLSRPKA) lie on the Periplasmic side of the membrane. Residues 215-235 (LPWLFVVLLYMMGDSVTSLMI) traverse the membrane as a helical segment. At 236–251 (RPLLVDRGLSLPDIGW) the chain is on the cytoplasmic side. A helical transmembrane segment spans residues 252–272 (ILGIVSYSARIVSALIAGLVI). At 273 to 281 (VKLGRIKSL) the chain is on the periplasmic side. The chain crosses the membrane as a helical span at residues 282-302 (IIFGFIADLTTLLYIIPAIGV). Residues 303 to 304 (SS) are Cytoplasmic-facing. Residues 305–325 (LLVLYTVCIIVNATQSMAYTA) traverse the membrane as a helical segment. The Periplasmic portion of the chain corresponds to 326–346 (LLSAMMDKCEKNTAATDYTMQ). 2 consecutive transmembrane segments (helical) span residues 347–367 (VSVMFLGGIAATVLSGMLATT) and 368–388 (MGYSFIFIMSAAVSLLSVFLI). The Periplasmic segment spans residues 389–396 (TQEYGVSS).

The protein belongs to the major facilitator superfamily.

The protein resides in the cell inner membrane. Involved in the TolC-like protein HgdD-dependent secretion of schizokinen, a dihydroxamate-type siderophore. Transports schizokinen from the cytoplasm to the periplasm. The chain is Schizokinen exporter SchE from Nostoc sp. (strain PCC 7120 / SAG 25.82 / UTEX 2576).